Here is a 391-residue protein sequence, read N- to C-terminus: Alanine racemase (391 aa).

Residue Lys38 is the Proton acceptor; specific for D-alanine of the active site. Residue Lys38 is modified to N6-(pyridoxal phosphate)lysine. Residue Arg136 participates in substrate binding. Tyr267 functions as the Proton acceptor; specific for L-alanine in the catalytic mechanism. A substrate-binding site is contributed by Met315.

It belongs to the alanine racemase family. It depends on pyridoxal 5'-phosphate as a cofactor.

It catalyses the reaction L-alanine = D-alanine. Its pathway is amino-acid biosynthesis; D-alanine biosynthesis; D-alanine from L-alanine: step 1/1. Catalyzes the interconversion of L-alanine and D-alanine. May also act on other amino acids. This chain is Alanine racemase (alr), found in Clostridium kluyveri (strain ATCC 8527 / DSM 555 / NBRC 12016 / NCIMB 10680 / K1).